The sequence spans 479 residues: Adenosylhomocysteinase (479 aa).

Substrate contacts are provided by T65, D145, and E205. 206 to 208 (TTT) contacts NAD(+). Substrate contacts are provided by K235 and D239. NAD(+)-binding positions include N240, 269–274 (GYGDVG), E292, N327, 348–350 (IGH), and N393.

It belongs to the adenosylhomocysteinase family. Requires NAD(+) as cofactor.

Its subcellular location is the cytoplasm. The enzyme catalyses S-adenosyl-L-homocysteine + H2O = L-homocysteine + adenosine. It participates in amino-acid biosynthesis; L-homocysteine biosynthesis; L-homocysteine from S-adenosyl-L-homocysteine: step 1/1. May play a key role in the regulation of the intracellular concentration of adenosylhomocysteine. This Herminiimonas arsenicoxydans protein is Adenosylhomocysteinase.